The chain runs to 1597 residues: Collagen alpha-1(XVII) chain (1597 aa).

Disordered stretches follow at residues 1-155 and 168-188; these read MDVT…PSTR and GSRS…PIPK. The Cytoplasmic segment spans residues 1–468; sequence MDVTKKNKRD…CGSCCSWWKW (468 aa). The nonhelical region (NC16A) stretch occupies residues 1–567; that stretch reads MDVTKKNKRD…AEQENGNLRG (567 aa). The span at 9–19 shows a compositional bias: basic and acidic residues; the sequence is RDGSEVTERII. Composition is skewed to polar residues over residues 58–96, 111–120, and 170–184; these read THGS…SPGS, EGSSSGNSSP, and RSAS…SNTL. The segment at 146 to 231 is necessary for interaction with DST and for the recruitment of DST to hemidesmosome; sequence RLQSASPSTR…WSSTLPAGSS (86 aa). The chain crosses the membrane as a helical; Signal-anchor for type II membrane protein span at residues 469 to 489; that stretch reads LLGLLLTWLLLLGLLFGLIAL. Residues 490 to 1597 lie on the Extracellular side of the membrane; that stretch reads AEEVRALKAR…KGGSWRLTSY (1108 aa). 5 disordered regions span residues 562 to 857, 907 to 927, 970 to 1041, 1289 to 1316, and 1344 to 1394; these read NGNL…SSSS, LRGP…FRVR, LETY…ISSS, TAGV…VSGA, and FIVG…SSMG. The interval 568–1572 is triple-helical region; sequence SPGPKGDMGS…ELPLEEQPLA (1005 aa). The segment covering 604–632 has biased composition (low complexity); that stretch reads PKGQKGSVGEPGMEGPMGQRGREGPMGPR. The segment covering 665–674 has biased composition (gly residues); sequence GPKGSGGSPG. Low complexity-rich tracts occupy residues 730–748 and 774–796; these read PGAV…AGPD and DPGK…PGRP. Pro residues predominate over residues 820 to 838; it reads PGPPGPPGAMGPPGPPGAP. The span at 847-857 shows a compositional bias: low complexity; sequence AGESFMGSSSS. 5 stretches are compositionally biased toward pro residues: residues 910 to 922, 977 to 986, 1023 to 1035, 1296 to 1310, and 1348 to 1357; these read PPGP…PPDL, PPGPPGPPGP, PGPP…PGPP, PGPP…PRGP, and PPGPPGPQGP. The segment covering 1377–1393 has biased composition (low complexity); that stretch reads SSHSASVSRGSSYSSSM. N-linked (GlcNAc...) asparagine glycosylation occurs at N1493. A disordered region spans residues 1531–1566; the sequence is GHPALEGTREKKETKVTKSMRGGEREASPSSHELPL. A compositionally biased stretch (basic and acidic residues) spans 1537–1557; sequence GTREKKETKVTKSMRGGEREA. The segment at 1573-1597 is nonhelical region (NC1); the sequence is SVLAMAYGVHVKISPKGGSWRLTSY.

Homotrimers of alpha 1(XVII)chains. Interacts (via cytoplasmic region) with ITGB4 (via cytoplasmic region). Interacts (via cytoplasmic region) with DST (via N-terminus). Interacts (via N-terminus) with PLEC. Interacts (via cytoplasmic region) with DSP. The intracellular/endo domain is disulfide-linked. Post-translationally, prolines at the third position of the tripeptide repeating unit (G-X-Y) are hydroxylated in some or all of the chains. In terms of processing, the ectodomain is shedded from the surface of keratinocytes resulting in a 120-kDa soluble form, also named as 120 kDa linear IgA disease antigen homolog. The shedding is mediated by membrane-bound metalloproteases. As to expression, upper lamina lucidalhemidesmosome.

Its subcellular location is the cell junction. The protein resides in the hemidesmosome. The protein localises to the membrane. It localises to the secreted. It is found in the extracellular space. Its subcellular location is the extracellular matrix. The protein resides in the basement membrane. Its function is as follows. The 120 kDa linear IgA disease antigen homolog is an anchoring filament component involved in dermal-epidermal cohesion. This chain is Collagen alpha-1(XVII) chain (COL17A1), found in Canis lupus familiaris (Dog).